A 283-amino-acid chain; its full sequence is Phosphatidylglycerol--prolipoprotein diacylglyceryl transferase (283 aa).

7 helical membrane passes run leucine 21–alanine 41, leucine 60–tyrosine 80, valine 95–tryptophan 115, phenylalanine 124–leucine 144, serine 176–isoleucine 196, glycine 203–valine 223, and methionine 239–phenylalanine 259. Arginine 143 lines the a 1,2-diacyl-sn-glycero-3-phospho-(1'-sn-glycerol) pocket.

The protein belongs to the Lgt family.

It is found in the cell inner membrane. It carries out the reaction L-cysteinyl-[prolipoprotein] + a 1,2-diacyl-sn-glycero-3-phospho-(1'-sn-glycerol) = an S-1,2-diacyl-sn-glyceryl-L-cysteinyl-[prolipoprotein] + sn-glycerol 1-phosphate + H(+). The protein operates within protein modification; lipoprotein biosynthesis (diacylglyceryl transfer). Functionally, catalyzes the transfer of the diacylglyceryl group from phosphatidylglycerol to the sulfhydryl group of the N-terminal cysteine of a prolipoprotein, the first step in the formation of mature lipoproteins. The sequence is that of Phosphatidylglycerol--prolipoprotein diacylglyceryl transferase from Aliivibrio salmonicida (strain LFI1238) (Vibrio salmonicida (strain LFI1238)).